The primary structure comprises 184 residues: Large ribosomal subunit protein uL6 (184 aa).

This sequence belongs to the universal ribosomal protein uL6 family. As to quaternary structure, part of the 50S ribosomal subunit.

This protein binds to the 23S rRNA, and is important in its secondary structure. It is located near the subunit interface in the base of the L7/L12 stalk, and near the tRNA binding site of the peptidyltransferase center. The sequence is that of Large ribosomal subunit protein uL6 from Thermomicrobium roseum (strain ATCC 27502 / DSM 5159 / P-2).